Reading from the N-terminus, the 133-residue chain is Small ribosomal subunit protein uS8 (133 aa).

Residues 1–28 form a disordered region; the sequence is MANHDPISDMLTRIRNASEKRHEKTKVP. Positions 16–26 are enriched in basic and acidic residues; the sequence is NASEKRHEKTK.

This sequence belongs to the universal ribosomal protein uS8 family. Part of the 30S ribosomal subunit. Contacts proteins S5 and S12.

Its function is as follows. One of the primary rRNA binding proteins, it binds directly to 16S rRNA central domain where it helps coordinate assembly of the platform of the 30S subunit. This chain is Small ribosomal subunit protein uS8, found in Prochlorococcus marinus (strain NATL2A).